The chain runs to 155 residues: Small ribosomal subunit protein uS7 (155 aa).

It belongs to the universal ribosomal protein uS7 family. As to quaternary structure, part of the 30S ribosomal subunit. Contacts proteins S9 and S11.

One of the primary rRNA binding proteins, it binds directly to 16S rRNA where it nucleates assembly of the head domain of the 30S subunit. Is located at the subunit interface close to the decoding center, probably blocks exit of the E-site tRNA. This Chlorobium phaeovibrioides (strain DSM 265 / 1930) (Prosthecochloris vibrioformis (strain DSM 265)) protein is Small ribosomal subunit protein uS7.